A 228-amino-acid chain; its full sequence is Cytochrome b-c1 complex subunit Rieske, mitochondrial (228 aa).

The N-terminal 26 residues, 1–26 (MLAKQFISKSLASSLRRLLPVSSTAS), are a transit peptide targeting the mitochondrion. Residues 27–63 (SLKGSMMTIPKFTSIRTYTDSPEMPDFSEYQTKSTGD) lie on the Mitochondrial matrix side of the membrane. Residues 64–93 (RSRVISYAMVGTMGALTAAGAQATVHDFLA) traverse the membrane as a helical segment. The Mitochondrial intermembrane segment spans residues 94–228 (SWSASADVLA…TFEGSKIIIG (135 aa)). A Rieske domain is found at 139–227 (IQEANSVDIS…YTFEGSKIII (89 aa)). The [2Fe-2S] cluster site is built by Cys172, His174, Cys191, and His194. Cys177 and Cys193 are joined by a disulfide.

The protein belongs to the Rieske iron-sulfur protein family. In terms of assembly, component of the ubiquinol-cytochrome c oxidoreductase (cytochrome b-c1 complex, complex III, CIII), a multisubunit enzyme composed of 3 respiratory subunits cytochrome b, cytochrome c1 and Rieske protein, 2 core protein subunits, and additional low-molecular weight protein subunits. The complex exists as an obligatory dimer and forms supercomplexes (SCs) in the inner mitochondrial membrane with cytochrome c oxidase (complex IV, CIV). Requires [2Fe-2S] cluster as cofactor.

It is found in the mitochondrion inner membrane. The enzyme catalyses a quinol + 2 Fe(III)-[cytochrome c](out) = a quinone + 2 Fe(II)-[cytochrome c](out) + 2 H(+)(out). Component of the ubiquinol-cytochrome c oxidoreductase, a multisubunit transmembrane complex that is part of the mitochondrial electron transport chain which drives oxidative phosphorylation. The respiratory chain contains 3 multisubunit complexes succinate dehydrogenase (complex II, CII), ubiquinol-cytochrome c oxidoreductase (cytochrome b-c1 complex, complex III, CIII) and cytochrome c oxidase (complex IV, CIV), that cooperate to transfer electrons derived from NADH and succinate to molecular oxygen, creating an electrochemical gradient over the inner membrane that drives transmembrane transport and the ATP synthase. The cytochrome b-c1 complex catalyzes electron transfer from ubiquinol to cytochrome c, linking this redox reaction to translocation of protons across the mitochondrial inner membrane, with protons being carried across the membrane as hydrogens on the quinol. In the process called Q cycle, 2 protons are consumed from the matrix, 4 protons are released into the intermembrane space and 2 electrons are passed to cytochrome c. The Rieske protein is a catalytic core subunit containing a [2Fe-2S] iron-sulfur cluster. It cycles between 2 conformational states during catalysis to transfer electrons from the quinol bound in the Q(0) site in cytochrome b to cytochrome c1. This is Cytochrome b-c1 complex subunit Rieske, mitochondrial (rip1) from Schizosaccharomyces pombe (strain 972 / ATCC 24843) (Fission yeast).